Here is a 286-residue protein sequence, read N- to C-terminus: Isopentenyl-diphosphate Delta-isomerase II (286 aa).

In terms of domain architecture, Nudix hydrolase spans 104 to 256; it reads MLHRAFSVFL…GLKLSPWFRL (153 aa). Residues cysteine 141 and glutamate 203 contribute to the active site.

This sequence belongs to the IPP isomerase type 1 family.

It carries out the reaction isopentenyl diphosphate = dimethylallyl diphosphate. It functions in the pathway isoprenoid biosynthesis; dimethylallyl diphosphate biosynthesis; dimethylallyl diphosphate from isopentenyl diphosphate: step 1/1. It participates in porphyrin-containing compound metabolism; chlorophyll biosynthesis. Functionally, catalyzes the 1,3-allylic rearrangement of the homoallylic substrate isopentenyl (IPP) to its highly electrophilic allylic isomer, dimethylallyl diphosphate (DMAPP). The chain is Isopentenyl-diphosphate Delta-isomerase II (IPI2) from Clarkia breweri (Fairy fans).